The following is a 202-amino-acid chain: Small ribosomal subunit protein uS2 (202 aa).

The protein belongs to the universal ribosomal protein uS2 family.

This chain is Small ribosomal subunit protein uS2 (rps2), found in Pyrococcus abyssi (strain GE5 / Orsay).